A 251-amino-acid polypeptide reads, in one-letter code: uncharacterized protein (251 aa).

The AMMECR1 domain maps to 21 to 246 (KGSSPFAFYA…ITYEEFNKQL (226 aa)).

This is an uncharacterized protein from Saccharomyces cerevisiae (strain ATCC 204508 / S288c) (Baker's yeast).